A 152-amino-acid polypeptide reads, in one-letter code: Transcriptional regulator MraZ (152 aa).

SpoVT-AbrB domains follow at residues 5–52 and 81–124; these read ASAI…PLQE and AHEC…DEAA.

This sequence belongs to the MraZ family. As to quaternary structure, forms oligomers.

It is found in the cytoplasm. Its subcellular location is the nucleoid. The polypeptide is Transcriptional regulator MraZ (Shewanella denitrificans (strain OS217 / ATCC BAA-1090 / DSM 15013)).